Reading from the N-terminus, the 70-residue chain is Large ribosomal subunit protein bL28 (70 aa).

It belongs to the bacterial ribosomal protein bL28 family.

This chain is Large ribosomal subunit protein bL28, found in Thermosipho melanesiensis (strain DSM 12029 / CIP 104789 / BI429).